A 214-amino-acid polypeptide reads, in one-letter code: Small ribosomal subunit protein uS3c (214 aa).

The region spanning 39-111 (IRTYLNKLAK…QITINVVEVE (73 aa)) is the KH type-2 domain.

It belongs to the universal ribosomal protein uS3 family. As to quaternary structure, part of the 30S ribosomal subunit.

The protein localises to the plastid. It localises to the chloroplast. The sequence is that of Small ribosomal subunit protein uS3c (rps3) from Thalassiosira pseudonana (Marine diatom).